Here is a 634-residue protein sequence, read N- to C-terminus: Chaperone protein DnaK 2 (634 aa).

Position 197 is a phosphothreonine; by autocatalysis (threonine 197). The segment covering 600 to 620 (ASAEASANAQAGPSSSSSSSS) has biased composition (low complexity). A disordered region spans residues 600-634 (ASAEASANAQAGPSSSSSSSSGDDDVIDAEFSESK). Positions 621–634 (GDDDVIDAEFSESK) are enriched in acidic residues.

This sequence belongs to the heat shock protein 70 family.

In terms of biological role, acts as a chaperone. In Synechococcus sp. (strain ATCC 27144 / PCC 6301 / SAUG 1402/1) (Anacystis nidulans), this protein is Chaperone protein DnaK 2.